Consider the following 529-residue polypeptide: Peptide chain release factor 3 (529 aa).

The tr-type G domain maps to 11-280 (AKRRTFAIIS…GLVEWAPAPM (270 aa)). GTP contacts are provided by residues 20 to 27 (SHPDAGKT), 88 to 92 (DTPGH), and 142 to 145 (NKLD).

This sequence belongs to the TRAFAC class translation factor GTPase superfamily. Classic translation factor GTPase family. PrfC subfamily.

It localises to the cytoplasm. Increases the formation of ribosomal termination complexes and stimulates activities of RF-1 and RF-2. It binds guanine nucleotides and has strong preference for UGA stop codons. It may interact directly with the ribosome. The stimulation of RF-1 and RF-2 is significantly reduced by GTP and GDP, but not by GMP. The polypeptide is Peptide chain release factor 3 (Escherichia coli O8 (strain IAI1)).